Reading from the N-terminus, the 135-residue chain is DNA-binding protein H-NS homolog (135 aa).

A DNA-binding region spans residues 112-117 (QGRTPS).

Belongs to the histone-like protein H-NS family. Homodimer that oligomerizes on DNA into higher-order complexes that form bridges between disparate regions of DNA compacting it.

The protein localises to the cytoplasm. It localises to the nucleoid. In terms of biological role, a DNA-binding protein implicated in transcriptional repression and chromosome organization and compaction. Binds nucleation sites in AT-rich DNA and bridges them, forming higher-order nucleoprotein complexes and condensing the chromosome. A subset of genes are repressed by H-NS in association with other proteins. The protein is DNA-binding protein H-NS homolog (hns) of Buchnera aphidicola subsp. Acyrthosiphon pisum (strain APS) (Acyrthosiphon pisum symbiotic bacterium).